Reading from the N-terminus, the 395-residue chain is NAD(P)H-quinone oxidoreductase subunit H (395 aa).

It belongs to the complex I 49 kDa subunit family. NDH-1 can be composed of about 15 different subunits; different subcomplexes with different compositions have been identified which probably have different functions.

It localises to the cellular thylakoid membrane. It catalyses the reaction a plastoquinone + NADH + (n+1) H(+)(in) = a plastoquinol + NAD(+) + n H(+)(out). It carries out the reaction a plastoquinone + NADPH + (n+1) H(+)(in) = a plastoquinol + NADP(+) + n H(+)(out). Functionally, NDH-1 shuttles electrons from an unknown electron donor, via FMN and iron-sulfur (Fe-S) centers, to quinones in the respiratory and/or the photosynthetic chain. The immediate electron acceptor for the enzyme in this species is believed to be plastoquinone. Couples the redox reaction to proton translocation, and thus conserves the redox energy in a proton gradient. Cyanobacterial NDH-1 also plays a role in inorganic carbon-concentration. The chain is NAD(P)H-quinone oxidoreductase subunit H from Prochlorococcus marinus (strain MIT 9515).